A 193-amino-acid polypeptide reads, in one-letter code: Protein GrpE (193 aa).

Residues 1 to 40 (MTEENRPQPDQPELTVTSESSVQETGENKARTPEQEGEAM) are disordered. Positions 14 to 25 (LTVTSESSVQET) are enriched in polar residues.

It belongs to the GrpE family. As to quaternary structure, homodimer.

It localises to the cytoplasm. In terms of biological role, participates actively in the response to hyperosmotic and heat shock by preventing the aggregation of stress-denatured proteins, in association with DnaK and GrpE. It is the nucleotide exchange factor for DnaK and may function as a thermosensor. Unfolded proteins bind initially to DnaJ; upon interaction with the DnaJ-bound protein, DnaK hydrolyzes its bound ATP, resulting in the formation of a stable complex. GrpE releases ADP from DnaK; ATP binding to DnaK triggers the release of the substrate protein, thus completing the reaction cycle. Several rounds of ATP-dependent interactions between DnaJ, DnaK and GrpE are required for fully efficient folding. The protein is Protein GrpE of Nitrosospira multiformis (strain ATCC 25196 / NCIMB 11849 / C 71).